We begin with the raw amino-acid sequence, 455 residues long: Protein U54 (455 aa).

The protein belongs to the herpesviridae UL82 family.

The polypeptide is Protein U54 (U54) (Homo sapiens (Human)).